A 483-amino-acid chain; its full sequence is uncharacterized protein (483 aa).

The 61-residue stretch at 11 to 71 (RYRKGDIIEL…SRYLEARAIE (61 aa)) folds into the TRAM domain. Residues C84, C90, C93, and C187 each coordinate [4Fe-4S] cluster. S-adenosyl-L-methionine-binding residues include Q312, Y341, E362, and D412. Residue C439 is the Nucleophile of the active site.

Belongs to the class I-like SAM-binding methyltransferase superfamily. RNA M5U methyltransferase family.

This is an uncharacterized protein from Chlorobaculum tepidum (strain ATCC 49652 / DSM 12025 / NBRC 103806 / TLS) (Chlorobium tepidum).